A 199-amino-acid polypeptide reads, in one-letter code: Probable GTP-binding protein EngB (199 aa).

The 175-residue stretch at 22–196 (NWPEFAFSGR…GKFILDLVDS (175 aa)) folds into the EngB-type G domain. Residues 30-37 (GRSNVGKS), 57-61 (GRTQS), 75-78 (DLPG), 142-145 (TKVD), and 175-177 (FSA) each bind GTP. The Mg(2+) site is built by serine 37 and threonine 59.

This sequence belongs to the TRAFAC class TrmE-Era-EngA-EngB-Septin-like GTPase superfamily. EngB GTPase family. Requires Mg(2+) as cofactor.

Functionally, necessary for normal cell division and for the maintenance of normal septation. The sequence is that of Probable GTP-binding protein EngB from Halothermothrix orenii (strain H 168 / OCM 544 / DSM 9562).